The sequence spans 202 residues: Syndecan-4 (202 aa).

A signal peptide spans 1–22 (MASPRLLALLLLLVGAFNAAAA). Residues 23 to 152 (ESIRETEVIN…NIFERTEVLS (130 aa)) lie on the Extracellular side of the membrane. Disordered regions lie at residues 41–75 (YFSG…GPED) and 87–112 (VPLD…ELEE). Ser43 is a glycosylation site (O-linked (Xyl...) (glycosaminoglycan) serine). The span at 46–63 (LPDDEDVGGPGQEPDDFE) shows a compositional bias: acidic residues. Ser65 and Ser67 each carry an O-linked (Xyl...) (glycosaminoglycan) serine glycan. The helical transmembrane segment at 153–173 (ALIVGGIVGILFAVFLVLLLV) threads the bilayer. Residues 174-202 (YRMKKKDEGSYDLGKKPIYKKAPTNEFYA) lie on the Cytoplasmic side of the membrane.

The protein belongs to the syndecan proteoglycan family. As to quaternary structure, homodimer. Interacts with CDCP1 and SDCBP. Interacts (via its cytoplasmic domain) with GIPC (via its PDZ domain). Interacts (via its cytoplasmic domain) with NUDT16L1. Interacts with DNM2; this interaction is markedly enhanced at focal ahesion site upon induction of focal adhesions and stress-fiber formation. In terms of processing, shedding, cleavage of the extracellular domain to release a soluble form, is enhanced by a number of factors such as heparanase, growth factor receptor action for example by thrombin or EGF. Physiological events such as stress or wound healing can activate the shedding. PMA-mediated shedding is inhibited by TIMP3. O-glycosylated; contains both chondroitin sulfate and heparan sulfate. Ser-43, Ser-65 and Ser-67 can all be modified by either chondroitin sulfate or heparan sulfate, and the protein exists in forms that contain only chondroitin sulfate, only heparan sulfate and both chondroitin sulfate and heparan sulfate.

Its subcellular location is the membrane. It localises to the secreted. Its function is as follows. Cell surface proteoglycan which regulates exosome biogenesis in concert with SDCBP and PDCD6IP. This chain is Syndecan-4, found in Sus scrofa (Pig).